We begin with the raw amino-acid sequence, 281 residues long: Microtubule-associated protein RP/EB family member 3 (281 aa).

In terms of domain architecture, Calponin-homology (CH) spans 14–116 (NLSRHDMLAW…FIQWFKKFFD (103 aa)). The tract at residues 157-181 (VPQRTSPTGPKNMQTSGRLSNVAPP) is disordered. Over residues 158 to 175 (PQRTSPTGPKNMQTSGRL) the composition is skewed to polar residues. Residues Ser-162 and Ser-176 each carry the phosphoserine modification. The 71-residue stretch at 194 to 264 (GGHETDAQIL…LYATEEGFAP (71 aa)) folds into the EB1 C-terminal domain. The interval 217–260 (DGLEKERDFYFSKLRDIELICQEHESENSPVISGIIGILYATEE) is APC-binding. A DCTN1-binding region spans residues 217–281 (DGLEKERDFY…EHQQEDQDEY (65 aa)). The tract at residues 261-281 (GFAPPEDDEIEEHQQEDQDEY) is disordered. Over residues 272–281 (EHQQEDQDEY) the composition is skewed to basic and acidic residues.

The protein belongs to the MAPRE family. As to quaternary structure, homodimer. Heterodimer with MAPRE1. Binds monomeric and polymerized GTP-bound tubulin. Interacts with APC2. Interacts with DCTN1 and SRCIN1. Binds to the C-terminal domain of APC. Interacts (via C-terminus) with CLIP1. Interacts with SLAIN2 and SLAIN1. Interacts with AKAP9. Interacts with PDE4DIP. Interacts with PDE4DIP isoform 13/MMG8/SMYLE; this interaction is required for its recruitment to the Golgi apparatus. In terms of tissue distribution, predominantly expressed in brain and muscle.

It localises to the cytoplasm. The protein localises to the cytoskeleton. Its function is as follows. Plus-end tracking protein (+TIP) that binds to the plus-end of microtubules and regulates the dynamics of the microtubule cytoskeleton. Promotes microtubule growth. May be involved in spindle function by stabilizing microtubules and anchoring them at centrosomes. Also acts as a regulator of minus-end microtubule organization: interacts with the complex formed by AKAP9 and PDE4DIP, leading to recruit CAMSAP2 to the Golgi apparatus, thereby tethering non-centrosomal minus-end microtubules to the Golgi, an important step for polarized cell movement. Promotes elongation of CAMSAP2-decorated microtubule stretches on the minus-end of microtubules. The chain is Microtubule-associated protein RP/EB family member 3 (MAPRE3) from Homo sapiens (Human).